An 85-amino-acid chain; its full sequence is Large ribosomal subunit protein bL27 (85 aa).

The tract at residues 1–22 (MAHKKGGGSSRNGRDSNAQRRG) is disordered.

It belongs to the bacterial ribosomal protein bL27 family.

This is Large ribosomal subunit protein bL27 from Sorangium cellulosum (strain So ce56) (Polyangium cellulosum (strain So ce56)).